The primary structure comprises 890 residues: ATP-dependent DNA helicase DDX11 (890 aa).

Residues 4-424 (KSGRFPFPFQ…KNLMYIKQIL (421 aa)) form the Helicase ATP-binding domain. 39 to 46 (SPTGTGKS) lines the ATP pocket. Residues 71 to 85 (LLEGQKDSDVVKEKN) are compositionally biased toward basic and acidic residues. Disordered regions lie at residues 71–95 (LLEG…EPDW) and 176–199 (EYES…DDDD). [4Fe-4S] cluster-binding residues include C246, C264, C294, and C329. The DEAH box signature appears at 372 to 375 (DEAH).

This sequence belongs to the DEAD box helicase family. DEAH subfamily. DDX11/CHL1 sub-subfamily. [4Fe-4S] cluster is required as a cofactor.

It is found in the nucleus. The protein localises to the nucleolus. Its subcellular location is the cytoplasm. It localises to the cytoskeleton. The protein resides in the spindle pole. It is found in the midbody. The protein localises to the microtubule organizing center. Its subcellular location is the centrosome. It catalyses the reaction Couples ATP hydrolysis with the unwinding of duplex DNA at the replication fork by translocating in the 5'-3' direction. This creates two antiparallel DNA single strands (ssDNA). The leading ssDNA polymer is the template for DNA polymerase III holoenzyme which synthesizes a continuous strand.. The enzyme catalyses ATP + H2O = ADP + phosphate + H(+). In terms of biological role, DNA-dependent ATPase and ATP-dependent DNA helicase that participates in various functions in genomic stability, including DNA replication, DNA repair and heterochromatin organization as well as in ribosomal RNA synthesis. Plays a role in DNA double-strand break (DSB) repair at the DNA replication fork during DNA replication recovery from DNA damage. Plays a role in the regulation of sister chromatid cohesion and mitotic chromosome segregation. Stimulates 5'-single-stranded DNA flap endonuclease activity of FEN1 in an ATP- and helicase-independent manner. Also plays a role in heterochromatin organization. Involved in rRNA transcription activation through binding to active hypomethylated rDNA gene loci by recruiting UBTF and the RNA polymerase Pol I transcriptional machinery. Plays a role in embryonic development. Associates with chromatin at DNA replication fork regions. Binds to single- and double-stranded DNAs. This Danio rerio (Zebrafish) protein is ATP-dependent DNA helicase DDX11.